Reading from the N-terminus, the 683-residue chain is U4/U6 small nuclear ribonucleoprotein Prp3 (683 aa).

Residues 1 to 87 (MALSKRELDE…HSKSSSDRSR (87 aa)) form the PWI domain. The segment covering 73–107 (GRSSRHSKSSSDRSRKRELKEVFGDDSEISKESSG) has biased composition (basic and acidic residues). A disordered region spans residues 73–135 (GRSSRHSKSS…IPGPPSESPG (63 aa)). Lysine 139 participates in a covalent cross-link: Glycyl lysine isopeptide (Lys-Gly) (interchain with G-Cter in SUMO2). The disordered stretch occupies residues 153-183 (IEERKKQLSFISPPTPQPKTPSSSQPERLPI). Serine 164 is subject to Phosphoserine. Threonine 167 is modified (phosphothreonine). Residues lysine 244 and lysine 252 each participate in a glycyl lysine isopeptide (Lys-Gly) (interchain with G-Cter in SUMO2) cross-link. A mediates interaction with SART3 region spans residues 416-550 (NLVEHPAQLN…VHISVYRVRN (135 aa)). The residue at position 619 (serine 619) is a Phosphoserine.

Component of the precatalytic spliceosome (spliceosome B complex). Component of the U4/U6-U5 tri-snRNP complex, a building block of the precatalytic spliceosome (spliceosome B complex). The U4/U6-U5 tri-snRNP complex is composed of the U4, U6 and U5 snRNAs and at least PRPF3, PRPF4, PRPF6, PRPF8, PRPF31, SNRNP200, TXNL4A, SNRNP40, SNRPB, SNRPD1, SNRPD2, SNRPD3, SNRPE, SNRPF, SNRPG, DDX23, CD2BP2, PPIH, SNU13, EFTUD2, SART1 and USP39, plus LSM2, LSM3, LSM4, LSM5, LSM6, LSM7 and LSM8. Interacts directly with PRPF4. Part of a heteromeric complex containing PPIH, PRPF3 and PRPF4 that is stable in the absence of RNA. Interacts with SART3; the interaction is direct and recruits the deubiquitinase USP4 to PRPF3. Interacts with PRPF19. Interacts ('Lys-63'-linked polyubiquitinated) with PRPF8 (via the MPN (JAB/Mov34) domain); may stabilize the U4/U6-U5 tri-snRNP complex. Interacts with ERCC6. Post-translationally, ubiquitinated. Undergoes 'Lys-63'-linked polyubiquitination by PRPF19 and deubiquitination by USP4. 'Lys-63'-linked ubiquitination increases the affinity for PRPF8 and may regulate the assembly of the U4/U6-U5 tri-snRNP complex.

The protein resides in the nucleus. It localises to the nucleus speckle. Functionally, plays a role in pre-mRNA splicing as component of the U4/U6-U5 tri-snRNP complex that is involved in spliceosome assembly, and as component of the precatalytic spliceosome (spliceosome B complex). The protein is U4/U6 small nuclear ribonucleoprotein Prp3 (PRPF3) of Pongo abelii (Sumatran orangutan).